Reading from the N-terminus, the 226-residue chain is uncharacterized protein (226 aa).

Disordered regions lie at residues 1 to 20 (MGAE…AVQT) and 205 to 226 (LDRK…QRDA).

This is an uncharacterized protein from Treponema pallidum (strain Nichols).